Consider the following 122-residue polypeptide: Putative syntaxin 6 (122 aa).

Residues 1–100 (MSNYRYSKLN…AKLTHLEDES (100 aa)) are Cytoplasmic-facing. The region spanning 31–93 (EQIIQEQDDE…DTAMKKMAKL (63 aa)) is the t-SNARE coiled-coil homology domain. The helical; Anchor for type IV membrane protein transmembrane segment at 101-121 (SQCKMIMVLSALLFFLVFVLL) threads the bilayer. Residue valine 122 is a topological domain, extracellular.

The protein belongs to the syntaxin family.

It localises to the membrane. Functionally, SNARE promoting movement of transport vesicles to target membranes. Potentially functions in retrograde trafficking and in the endocytic recycling pathway. The chain is Putative syntaxin 6 (syx-6) from Caenorhabditis elegans.